Here is an 80-residue protein sequence, read N- to C-terminus: Iota-conotoxin-like r11c (80 aa).

The first 19 residues, 1 to 19 (MKLCLTFLLVLMILASVTG), serve as a signal peptide directing secretion. A propeptide spanning residues 20–35 (EKSSKHTLSRAARVKN) is cleaved from the precursor. Pro-38 and Pro-47 each carry 4-hydroxyproline; partial. Intrachain disulfides connect Cys-41/Cys-55, Cys-48/Cys-58, Cys-54/Cys-63, and Cys-57/Cys-72. Pro-65 is modified (4-hydroxyproline). Leu-78 is modified (D-leucine). Position 80 (Arg-80) is a propeptide, removed by a carboxypeptidase.

Post-translationally, the natural D-Leu form of the peptide is more potent than the synthetic L-Leu form. Expressed by the venom duct.

It localises to the secreted. In terms of biological role, iota-conotoxins bind to voltage-gated sodium channels (Nav) and act as agonists by shifting the voltage-dependence of activation to more hyperpolarized levels. Causes circular motion, convulsions, copious urination, rigid paralysis and death upon intracranial injection into mice. Causes unbalanced swimming, swimming in diagonal and vertical motion and death, when injected intraperitoneally into goldfish. L-Leu and D-Leu forms are active on both nerve and muscle. This Conus radiatus (Rayed cone) protein is Iota-conotoxin-like r11c.